A 254-amino-acid chain; its full sequence is Major prion protein (254 aa).

Residues 1 to 22 (MANLGYWLLALFVATWTDVGLC) form the signal peptide. The segment at 23 to 231 (KKRPKPGGWN…SQAYYDGRRS (209 aa)) is interaction with GRB2, ERI3 and SYN1. Positions 25-107 (RPKPGGWNTG…QWNKPSKPKT (83 aa)) are disordered. A run of 5 repeats spans residues 51–59 (PQGGGTWGQ), 60–67 (PHGGGWGQ), 68–75 (PHGGGWGQ), 76–83 (PHGGGWGQ), and 84–91 (PHGGGWGQ). The tract at residues 51–91 (PQGGGTWGQPHGGGWGQPHGGGWGQPHGGGWGQPHGGGWGQ) is 5 X 8 AA tandem repeats of P-H-G-G-G-W-G-Q. The span at 52-95 (QGGGTWGQPHGGGWGQPHGGGWGQPHGGGWGQPHGGGWGQGGGT) shows a compositional bias: gly residues. Cu(2+) is bound by residues His61, Gly62, Gly63, His69, Gly70, Gly71, His77, Gly78, Gly79, His85, Gly86, and Gly87. The cysteines at positions 179 and 214 are disulfide-linked. N-linked (GlcNAc...) asparagine glycosylation is found at Asn181 and Asn197. Residue Ser231 is the site of GPI-anchor amidated serine attachment. The propeptide at 232–254 (SAVLFSSPPMILLISFLIFLIVG) is removed in mature form.

It belongs to the prion family. As to quaternary structure, monomer and homodimer. Has a tendency to aggregate into amyloid fibrils containing a cross-beta spine, formed by a steric zipper of superposed beta-strands. Soluble oligomers may represent an intermediate stage on the path to fibril formation. Copper binding may promote oligomerization. Interacts with GRB2, APP, ERI3/PRNPIP and SYN1. Mislocalized cytosolically exposed PrP interacts with MGRN1; this interaction alters MGRN1 subcellular location and causes lysosomal enlargement. Interacts with KIAA1191.

It is found in the cell membrane. Its subcellular location is the golgi apparatus. In terms of biological role, its primary physiological function is unclear. Has cytoprotective activity against internal or environmental stresses. May play a role in neuronal development and synaptic plasticity. May be required for neuronal myelin sheath maintenance. May play a role in iron uptake and iron homeostasis. Soluble oligomers are toxic to cultured neuroblastoma cells and induce apoptosis (in vitro). Association with GPC1 (via its heparan sulfate chains) targets PRNP to lipid rafts. Also provides Cu(2+) or Zn(2+) for the ascorbate-mediated GPC1 deaminase degradation of its heparan sulfate side chains. The chain is Major prion protein (PRNP) from Sigmodon hispidus (Hispid cotton rat).